Here is a 798-residue protein sequence, read N- to C-terminus: Interphotoreceptor matrix proteoglycan 1 (798 aa).

Positions Met-1–Gly-20 are cleaved as a signal peptide. Residue Asn-142 is glycosylated (N-linked (GlcNAc...) asparagine). The region spanning Ser-238–Leu-360 is the SEA 1 domain. Residues Thr-442 and Thr-445 are each glycosylated (O-linked (GalNAc...) threonine). Positions His-574–Gln-687 constitute an SEA 2 domain. Residues Asn-595 and Asn-619 are each glycosylated (N-linked (GlcNAc...) asparagine). Residues Lys-624–Arg-632 carry the Heparin- and hyaluronan-binding motif. N-linked (GlcNAc...) asparagine glycans are attached at residues Asn-633 and Asn-651. The tract at residues Ala-741–Asn-798 is disordered. Residues Asp-786–Asn-798 are compositionally biased toward acidic residues.

In terms of processing, highly glycosylated (N- and O-linked carbohydrates and sialic acid).

The protein resides in the cell projection. It is found in the cilium. The protein localises to the photoreceptor outer segment. Its subcellular location is the secreted. It localises to the extracellular space. The protein resides in the extracellular matrix. It is found in the interphotoreceptor matrix. The protein localises to the photoreceptor inner segment. In terms of biological role, chondroitin sulfate-, heparin- and hyaluronan-binding protein. May serve to form a basic macromolecular scaffold comprising the insoluble interphotoreceptor matrix. In Rattus norvegicus (Rat), this protein is Interphotoreceptor matrix proteoglycan 1.